Reading from the N-terminus, the 354-residue chain is Probable glucan endo-1,3-beta-glucosidase BG5 (354 aa).

The N-terminal stretch at 1 to 30 is a signal peptide; that stretch reads MLYLPKKLFLFFFSCIVVIVNYNNSDFVNA. Catalysis depends on Glu-137, which acts as the Proton donor. Glu-276 functions as the Nucleophile in the catalytic mechanism. A glycan (N-linked (GlcNAc...) asparagine) is linked at Asn-286.

Belongs to the glycosyl hydrolase 17 family.

The protein resides in the secreted. The enzyme catalyses Hydrolysis of (1-&gt;3)-beta-D-glucosidic linkages in (1-&gt;3)-beta-D-glucans.. Functionally, may play a role in plant defense against pathogens. The protein is Probable glucan endo-1,3-beta-glucosidase BG5 of Arabidopsis thaliana (Mouse-ear cress).